Consider the following 888-residue polypeptide: Protein translocase subunit SecA (888 aa).

ATP-binding positions include Gln-81, 99–103 (GEGKT), and Asp-489.

The protein belongs to the SecA family.

It localises to the plastid. The protein resides in the chloroplast stroma. It is found in the chloroplast thylakoid membrane. The enzyme catalyses ATP + H2O + cellular proteinSide 1 = ADP + phosphate + cellular proteinSide 2.. Functionally, has a central role in coupling the hydrolysis of ATP to the transfer of proteins across the thylakoid membrane. The chain is Protein translocase subunit SecA from Trieres chinensis (Marine centric diatom).